The sequence spans 93 residues: Small ribosomal subunit protein uS19 (93 aa).

The protein belongs to the universal ribosomal protein uS19 family.

Protein S19 forms a complex with S13 that binds strongly to the 16S ribosomal RNA. This Mycobacterium marinum (strain ATCC BAA-535 / M) protein is Small ribosomal subunit protein uS19.